The sequence spans 129 residues: Transmembrane protein 105 (129 aa).

Helical transmembrane passes span 23–43 (AGNVIGQLIYLLTWSLFTAWL) and 94–114 (FLAGGLHLVPSSLSLAACGVV).

The protein resides in the membrane. This is Transmembrane protein 105 (TMEM105) from Homo sapiens (Human).